The chain runs to 347 residues: Coproporphyrinogen-III oxidase, aerobic 2 (347 aa).

A disordered region spans residues 1–31 (MGRHSDNSLQESANHTVLLTSPTNTIPKDSR). A compositionally biased stretch (polar residues) spans 7 to 31 (NSLQESANHTVLLTSPTNTIPKDSR). The tract at residues 75–84 (VIREGRVFEQ) is important for dimerization. Position 119 (serine 119) interacts with substrate. Histidine 133 (proton donor) is an active-site residue. Residues 135-137 (NYR) and 305-310 (KGRTES) contribute to the substrate site. The segment at 287-322 (YVEFNLVYDRGTVFGLQTKGRTESILMSLPPLARWE) is important for dimerization.

The protein belongs to the aerobic coproporphyrinogen-III oxidase family. In terms of assembly, homodimer.

The protein localises to the cytoplasm. The catalysed reaction is coproporphyrinogen III + O2 + 2 H(+) = protoporphyrinogen IX + 2 CO2 + 2 H2O. It participates in porphyrin-containing compound metabolism; protoporphyrin-IX biosynthesis; protoporphyrinogen-IX from coproporphyrinogen-III (O2 route): step 1/1. In terms of biological role, key enzyme in heme biosynthesis. Catalyzes the oxidative decarboxylation of propionic acid side chains of rings A and B of coproporphyrinogen III. This is Coproporphyrinogen-III oxidase, aerobic 2 from Nostoc sp. (strain PCC 7120 / SAG 25.82 / UTEX 2576).